The sequence spans 454 residues: MSSSSREGSPDWLRSYEAPMTTSLLSLSSSDDDSPYRESEVISSLPLPDDDGDDIVVLETESVELLTRKNSETKVVTKQVSIEQVFSRKKKADASLNLEDSCAGKENGNNVDCEKLSSKHKDAQGGADSVWLVSSDSEPSSPIKQEVTVSTEKDADFVLEATEEEPAVKTVRKEKSPKTKSKSSRKTPKEGNSAQEILKTEDKDTDTTIAEQVTPEKSPKTKSKSSRKTPKEENCAQEILKTEDKDKDTDTDTIIAEEVTTDQKIKPSSGSSSRLPLVLSEKVNRTKVLVECEGDSIDLSGDMGAVGRVVVSDTTGDMYLDLKGTIYKSTIIPSRTFCVVNVGQTEAKIEAIMNDFIQLIPQSNVYEAETMVEGTLEGFTFESDDESNKNAKTAVKPADQSVGTEEETNTKAKPKAKAKGETVIGKKRGRPSKEKQPPAKKARNSAPKKPKAKK.

Disordered stretches follow at residues 24–53 (LLSL…DDGD), 103–249 (AGKE…DKDT), and 380–454 (TFES…KAKK). Over residues 112 to 123 (DCEKLSSKHKDA) the composition is skewed to basic and acidic residues. Positions 132 to 150 (LVSSDSEPSSPIKQEVTVS) are enriched in polar residues. Residues 229-249 (TPKEENCAQEILKTEDKDKDT) show a composition bias toward basic and acidic residues. Over residues 438 to 454 (PAKKARNSAPKKPKAKK) the composition is skewed to basic residues.

As to quaternary structure, interacts with TOP6A, RHL1 and itself, but not with TOP6B. In terms of tissue distribution, expressed in expanding cotyledons, vascular cells, elongating root cells, developing leaf trichomes, root and apical meristems and lateral root primordia.

The protein localises to the nucleus. Component of the DNA topoisomerase VI complex. Binds to DNA. Required for chromatin organization and progression of endoreduplication cycles. The loss of BIN4 activates the ATM- and ATR-dependent DNA damage responses in postmitotic cells and induces the ectopic expression of the mitotic G2/M-specific cyclin B1;1 gene in non-dividing cells. The polypeptide is DNA-binding protein BIN4 (BIN4) (Arabidopsis thaliana (Mouse-ear cress)).